Consider the following 332-residue polypeptide: GTP cyclohydrolase-2 (332 aa).

2 disordered regions span residues 1 to 20 (MASK…SETH) and 25 to 46 (PLLS…IPPE). The segment covering 29 to 41 (PTLTPSHIPSQTP) has biased composition (polar residues). Position 171–175 (171–175 (RIHSE)) interacts with GTP. Zn(2+) is bound by residues cysteine 176, cysteine 187, and cysteine 189. Residues glutamine 192, 214 to 216 (EGR), and threonine 236 each bind GTP. Catalysis depends on aspartate 248, which acts as the Proton acceptor. Residue arginine 250 is the Nucleophile of the active site. GTP-binding residues include threonine 271 and lysine 276.

The protein belongs to the GTP cyclohydrolase II family. Zn(2+) serves as cofactor.

The enzyme catalyses GTP + 4 H2O = 2,5-diamino-6-hydroxy-4-(5-phosphoribosylamino)-pyrimidine + formate + 2 phosphate + 3 H(+). The protein operates within cofactor biosynthesis; riboflavin biosynthesis; 5-amino-6-(D-ribitylamino)uracil from GTP: step 1/4. Catalyzes the conversion of GTP to 2,5-diamino-6-ribosylamino-4(3H)-pyrimidinone 5'-phosphate (DARP), formate and pyrophosphate. The protein is GTP cyclohydrolase-2 (RIB1) of Meyerozyma guilliermondii (strain ATCC 6260 / CBS 566 / DSM 6381 / JCM 1539 / NBRC 10279 / NRRL Y-324) (Yeast).